We begin with the raw amino-acid sequence, 553 residues long: Coiled-coil domain-containing protein 85A (553 aa).

The span at 1–28 shows a compositional bias: low complexity; sequence MSKAAGGAAAAAAAAESCSPAPAGSSAA. The interval 1-37 is disordered; that stretch reads MSKAAGGAAAAAAAAESCSPAPAGSSAAPPAPVEDLS. Coiled coils occupy residues 43–109 and 137–169; these read ELLQ…RDLC and MHKEVALYLQKLKDLEVKQEEVVKENMELKELC. Disordered regions lie at residues 203-414, 433-461, and 491-518; these read YVRD…GMNE, ENRMLPQASQNRRQPPTRNSSNMEKGWGS, and SGADGSNSSPNSAASFSGHATPSQQPEP. Residues 209-220 are compositionally biased toward low complexity; sequence DGSSTSSTGSTD. Basic and acidic residues predominate over residues 236 to 260; sequence HLQKPRSEGSPEHSKHRSASPEHPQ. Residues 376–389 show a composition bias toward gly residues; that stretch reads GGSGGSGGSGGGSR. Basic and acidic residues predominate over residues 391–403; sequence GTLRRQAQEDGSP. The stretch at 412–443 forms a coiled coil; it reads MNESTLSYVRQLEARVRQLEEENRMLPQASQN. Over residues 439-455 the composition is skewed to polar residues; sequence QASQNRRQPPTRNSSNM. Residues 491–508 show a composition bias toward low complexity; the sequence is SGADGSNSSPNSAASFSG. Arg-541 is subject to Asymmetric dimethylarginine.

It belongs to the CCDC85 family. In terms of assembly, may interact with ARVCF; CTNND1; CTNND2 and PKP4.

Its subcellular location is the cell junction. It localises to the adherens junction. Its function is as follows. May play a role in cell-cell adhesion and epithelium development through its interaction with proteins of the beta-catenin family. The polypeptide is Coiled-coil domain-containing protein 85A (CCDC85A) (Homo sapiens (Human)).